A 432-amino-acid polypeptide reads, in one-letter code: Gamma-glutamyl phosphate reductase (432 aa).

Belongs to the gamma-glutamyl phosphate reductase family.

Its subcellular location is the cytoplasm. The enzyme catalyses L-glutamate 5-semialdehyde + phosphate + NADP(+) = L-glutamyl 5-phosphate + NADPH + H(+). It functions in the pathway amino-acid biosynthesis; L-proline biosynthesis; L-glutamate 5-semialdehyde from L-glutamate: step 2/2. In terms of biological role, catalyzes the NADPH-dependent reduction of L-glutamate 5-phosphate into L-glutamate 5-semialdehyde and phosphate. The product spontaneously undergoes cyclization to form 1-pyrroline-5-carboxylate. In Corynebacterium melassecola, this protein is Gamma-glutamyl phosphate reductase.